A 92-amino-acid polypeptide reads, in one-letter code: Integration host factor subunit beta (92 aa).

This sequence belongs to the bacterial histone-like protein family. As to quaternary structure, heterodimer of an alpha and a beta chain.

Functionally, this protein is one of the two subunits of integration host factor, a specific DNA-binding protein that functions in genetic recombination as well as in transcriptional and translational control. This is Integration host factor subunit beta from Bartonella tribocorum (strain CIP 105476 / IBS 506).